The sequence spans 293 residues: Formamidopyrimidine-DNA glycosylase (293 aa).

The Schiff-base intermediate with DNA role is filled by Pro-2. The active-site Proton donor is the Glu-3. The Proton donor; for beta-elimination activity role is filled by Lys-61. His-104, Arg-123, and Lys-169 together coordinate DNA. The FPG-type zinc finger occupies 255–289 (DAYGREGEPCRRCGAIMRRDKFMNRSSFYCPRCQP). Arg-279 (proton donor; for delta-elimination activity) is an active-site residue.

The protein belongs to the FPG family. In terms of assembly, monomer. It depends on Zn(2+) as a cofactor.

The catalysed reaction is Hydrolysis of DNA containing ring-opened 7-methylguanine residues, releasing 2,6-diamino-4-hydroxy-5-(N-methyl)formamidopyrimidine.. The enzyme catalyses 2'-deoxyribonucleotide-(2'-deoxyribose 5'-phosphate)-2'-deoxyribonucleotide-DNA = a 3'-end 2'-deoxyribonucleotide-(2,3-dehydro-2,3-deoxyribose 5'-phosphate)-DNA + a 5'-end 5'-phospho-2'-deoxyribonucleoside-DNA + H(+). Functionally, involved in base excision repair of DNA damaged by oxidation or by mutagenic agents. Acts as a DNA glycosylase that recognizes and removes damaged bases. Has a preference for oxidized purines, such as 7,8-dihydro-8-oxoguanine (8-oxoG). Has AP (apurinic/apyrimidinic) lyase activity and introduces nicks in the DNA strand. Cleaves the DNA backbone by beta-delta elimination to generate a single-strand break at the site of the removed base with both 3'- and 5'-phosphates. In Mycolicibacterium vanbaalenii (strain DSM 7251 / JCM 13017 / BCRC 16820 / KCTC 9966 / NRRL B-24157 / PYR-1) (Mycobacterium vanbaalenii), this protein is Formamidopyrimidine-DNA glycosylase.